Reading from the N-terminus, the 543-residue chain is Biotinidase (543 aa).

The first 41 residues, 1 to 41 (MAHAHIQGGRRAKSRFVVCIMSGARSKLALFLCGCYVVALG), serve as a signal peptide directing secretion. The CN hydrolase domain maps to 72–351 (NPLALISRQE…VGLIGAENAT (280 aa)). The Proton acceptor role is filled by Glu112. Asn119 carries N-linked (GlcNAc...) asparagine glycosylation. The N-linked (GlcNAc...) (complex) asparagine glycan is linked to Asn150. The N-linked (GlcNAc...) asparagine glycan is linked to Asn203. Catalysis depends on Lys212, which acts as the Proton donor. Cys245 (nucleophile) is an active-site residue. N-linked (GlcNAc...) asparagine glycans are attached at residues Asn349, Asn402, and Asn489.

Belongs to the carbon-nitrogen hydrolase superfamily. BTD/VNN family.

Its subcellular location is the secreted. The protein localises to the extracellular space. The enzyme catalyses biocytin + H2O = biotin + L-lysine. It carries out the reaction biotin amide + H2O = biotin + NH4(+). Its function is as follows. Catalytic release of biotin from biocytin, the product of biotin-dependent carboxylases degradation. The polypeptide is Biotinidase (Homo sapiens (Human)).